Here is a 579-residue protein sequence, read N- to C-terminus: 2-isopropylmalate synthase (579 aa).

In terms of domain architecture, Pyruvate carboxyltransferase spans 40–314 (PRWCAVDLRD…DPMIDFSDID (275 aa)). Mg(2+)-binding residues include Asp-49, His-253, His-255, and Asn-289. The interval 456-579 (SGKADGQWGR…VNRAIRDAQS (124 aa)) is regulatory domain.

It belongs to the alpha-IPM synthase/homocitrate synthase family. LeuA type 2 subfamily. Homodimer. The cofactor is Mg(2+).

The protein localises to the cytoplasm. The catalysed reaction is 3-methyl-2-oxobutanoate + acetyl-CoA + H2O = (2S)-2-isopropylmalate + CoA + H(+). It functions in the pathway amino-acid biosynthesis; L-leucine biosynthesis; L-leucine from 3-methyl-2-oxobutanoate: step 1/4. In terms of biological role, catalyzes the condensation of the acetyl group of acetyl-CoA with 3-methyl-2-oxobutanoate (2-ketoisovalerate) to form 3-carboxy-3-hydroxy-4-methylpentanoate (2-isopropylmalate). In Pseudarthrobacter chlorophenolicus (strain ATCC 700700 / DSM 12829 / CIP 107037 / JCM 12360 / KCTC 9906 / NCIMB 13794 / A6) (Arthrobacter chlorophenolicus), this protein is 2-isopropylmalate synthase.